A 232-amino-acid chain; its full sequence is LRRN4 C-terminal-like protein (232 aa).

Residues 1–22 (MPHSPCLLWLLAVTSLVPGTQP) form the signal peptide. Topologically, residues 23–189 (LVAGDLEGDE…RLTVPPRPLT (167 aa)) are extracellular. The Fibronectin type-III domain maps to 77-172 (PPHPPRLGEV…GAEGLDSADG (96 aa)). The N-linked (GlcNAc...) asparagine glycan is linked to N127. Residues 190–210 (LLHAAMGVGSALALLSCSALV) traverse the membrane as a helical segment. Residues 211-232 (WHFCLRQRWGCPRRGRPSHAGL) are Cytoplasmic-facing.

The protein localises to the membrane. In Bos taurus (Bovine), this protein is LRRN4 C-terminal-like protein (LRRN4CL).